Here is a 334-residue protein sequence, read N- to C-terminus: Heat-inducible transcription repressor HrcA (334 aa).

This sequence belongs to the HrcA family.

Functionally, negative regulator of class I heat shock genes (grpE-dnaK-dnaJ and groELS operons). Prevents heat-shock induction of these operons. In Albidiferax ferrireducens (strain ATCC BAA-621 / DSM 15236 / T118) (Rhodoferax ferrireducens), this protein is Heat-inducible transcription repressor HrcA.